Consider the following 1271-residue polypeptide: DNA-directed RNA polymerase subunit beta (1271 aa).

Belongs to the RNA polymerase beta chain family. In terms of assembly, the RNAP catalytic core consists of 2 alpha, 1 beta, 1 beta' and 1 omega subunit. When a sigma factor is associated with the core the holoenzyme is formed, which can initiate transcription.

It catalyses the reaction RNA(n) + a ribonucleoside 5'-triphosphate = RNA(n+1) + diphosphate. DNA-dependent RNA polymerase catalyzes the transcription of DNA into RNA using the four ribonucleoside triphosphates as substrates. In Acholeplasma laidlawii (strain PG-8A), this protein is DNA-directed RNA polymerase subunit beta.